Consider the following 381-residue polypeptide: O-antigen chain mannosyltransferase B (381 aa).

This sequence belongs to the glycosyltransferase group 1 family. Glycosyltransferase 4 subfamily.

It catalyses the reaction alpha-D-mannosyl-(1-&gt;3)-N-acetyl-alpha-D-glucosaminyl-di-trans,octa-cis-undecaprenyl diphosphate + 2 GDP-alpha-D-mannose = alpha-D-mannosyl-(1-&gt;3)-alpha-D-mannosyl-(1-&gt;3)-alpha-D-mannosyl-(1-&gt;3)-N-acetyl-alpha-D-glucosaminyl-di-trans,octa-cis-undecaprenyl diphosphate + 2 GDP + 2 H(+). It functions in the pathway bacterial outer membrane biogenesis; LPS O-antigen biosynthesis. Mannosyltransferase involved in the biosynthesis of the repeat unit of the lipopolysaccharide (LPS) O-antigen region. Catalyzes the transfer of two alpha-(1-&gt;3)-linked mannose residues to the product of the WbdC enzyme during the synthesis of the adapter region. The polypeptide is O-antigen chain mannosyltransferase B (Escherichia coli).